The chain runs to 153 residues: Transcriptional repressor NrdR (153 aa).

The segment at Cys3 to Cys33 is a zinc-finger region. An ATP-cone domain is found at Leu48 to Thr138.

This sequence belongs to the NrdR family. The cofactor is Zn(2+).

Negatively regulates transcription of bacterial ribonucleotide reductase nrd genes and operons by binding to NrdR-boxes. This chain is Transcriptional repressor NrdR, found in Clostridioides difficile (strain 630) (Peptoclostridium difficile).